A 282-amino-acid chain; its full sequence is Bifunctional protein FolD 1 (282 aa).

Residues 167–169 (GRS) and Ser192 contribute to the NADP(+) site.

It belongs to the tetrahydrofolate dehydrogenase/cyclohydrolase family. In terms of assembly, homodimer.

The enzyme catalyses (6R)-5,10-methylene-5,6,7,8-tetrahydrofolate + NADP(+) = (6R)-5,10-methenyltetrahydrofolate + NADPH. It catalyses the reaction (6R)-5,10-methenyltetrahydrofolate + H2O = (6R)-10-formyltetrahydrofolate + H(+). It participates in one-carbon metabolism; tetrahydrofolate interconversion. In terms of biological role, catalyzes the oxidation of 5,10-methylenetetrahydrofolate to 5,10-methenyltetrahydrofolate and then the hydrolysis of 5,10-methenyltetrahydrofolate to 10-formyltetrahydrofolate. This chain is Bifunctional protein FolD 1, found in Colwellia psychrerythraea (strain 34H / ATCC BAA-681) (Vibrio psychroerythus).